A 467-amino-acid chain; its full sequence is Gamma-aminobutyric acid receptor subunit gamma-3 (467 aa).

The first 17 residues, 1 to 17, serve as a signal peptide directing secretion; it reads MAAKLLLLLCLFSGLHA. Over 18-256 the chain is Extracellular; the sequence is RSRRVEEDDS…FELSRRMGYF (239 aa). Residue Asn110 is glycosylated (N-linked (GlcNAc...) asparagine). Cysteines 171 and 185 form a disulfide. An N-linked (GlcNAc...) asparagine glycan is attached at Asn228. The helical transmembrane segment at 257 to 277 threads the bilayer; that stretch reads TIQTYIPCILTVVLSWVSFWI. Residues 278-283 lie on the Cytoplasmic side of the membrane; it reads KKDATP. A helical membrane pass occupies residues 284-303; the sequence is ARTTLGITTVLTMTTLSTIA. At 304–311 the chain is on the extracellular side; it reads RKSLPRVS. A helical transmembrane segment spans residues 312–332; that stretch reads YVTAMDLFVTVCFLFVFAALM. The Cytoplasmic portion of the chain corresponds to 333-446; it reads EYATLNYYSS…DVSELDSYSR (114 aa). A helical membrane pass occupies residues 447-467; sequence VFFPTSFLLFNLVYWVGYLYL.

It belongs to the ligand-gated ion channel (TC 1.A.9) family. Gamma-aminobutyric acid receptor (TC 1.A.9.5) subfamily. GABRG3 sub-subfamily. In terms of assembly, heteropentamer, formed by a combination of alpha (GABRA1-6), beta (GABRB1-3), gamma (GABRG1-3), delta (GABRD), epsilon (GABRE), rho (GABRR1-3), pi (GABRP) and theta (GABRQ) chains, each subunit exhibiting distinct physiological and pharmacological properties. In terms of processing, may be palmitoylated. As to expression, expressed in brain.

It localises to the postsynaptic cell membrane. The protein localises to the cell membrane. It carries out the reaction chloride(in) = chloride(out). With respect to regulation, allosterically potentiated by alphaxalone. Allosterically inhibited by pregnenolone sulfate. Inhibited by zinc and lanthanum. Gamma subunit of the heteropentameric ligand-gated chloride channel gated by gamma-aminobutyric acid (GABA), a major inhibitory neurotransmitter in the brain. GABA-gated chloride channels, also named GABA(A) receptors (GABAAR), consist of five subunits arranged around a central pore and contain GABA active binding site(s) located at the alpha and beta subunit interface(s). When activated by GABA, GABAARs selectively allow the flow of chloride across the cell membrane down their electrochemical gradient. The protein is Gamma-aminobutyric acid receptor subunit gamma-3 of Rattus norvegicus (Rat).